Consider the following 441-residue polypeptide: Glutamyl-tRNA reductase (441 aa).

Substrate is bound by residues 49–52 (TCNR), serine 110, 115–117 (EPQ), and glutamine 121. The Nucleophile role is filled by cysteine 50. 190-195 (GAGEMA) is a binding site for NADP(+).

This sequence belongs to the glutamyl-tRNA reductase family. Homodimer.

It carries out the reaction (S)-4-amino-5-oxopentanoate + tRNA(Glu) + NADP(+) = L-glutamyl-tRNA(Glu) + NADPH + H(+). The protein operates within porphyrin-containing compound metabolism; protoporphyrin-IX biosynthesis; 5-aminolevulinate from L-glutamyl-tRNA(Glu): step 1/2. Functionally, catalyzes the NADPH-dependent reduction of glutamyl-tRNA(Glu) to glutamate 1-semialdehyde (GSA). This chain is Glutamyl-tRNA reductase, found in Sulfurihydrogenibium sp. (strain YO3AOP1).